The following is a 67-amino-acid chain: Large ribosomal subunit protein bL35 (67 aa).

The protein belongs to the bacterial ribosomal protein bL35 family.

This is Large ribosomal subunit protein bL35 from Novosphingobium aromaticivorans (strain ATCC 700278 / DSM 12444 / CCUG 56034 / CIP 105152 / NBRC 16084 / F199).